Reading from the N-terminus, the 237-residue chain is UDP-Gal:alpha-D-GlcNAc-diphosphoundecaprenol beta-1,4-galactosyltransferase (237 aa).

Glu101 acts as the Nucleophile in catalysis.

This sequence belongs to the glycosyltransferase 26 family. Requires Mn(2+) as cofactor. Ni(2+) serves as cofactor. Pb(2+) is required as a cofactor.

It catalyses the reaction N-acetyl-alpha-D-glucosaminyl-di-trans,octa-cis-undecaprenyl diphosphate + UDP-alpha-D-galactose = beta-D-Gal-(1-&gt;4)-alpha-D-GlcNAc-di-trans,octa-cis-undecaprenyl diphosphate + UDP + H(+). Its pathway is bacterial outer membrane biogenesis; LPS O-antigen biosynthesis. In terms of biological role, galactosyltransferase that adds one galactose residue in the beta-1-4 linkage to GlcNAc-alpha-pyrophosphate-lipid in the biosynthesis of the O-polysaccharide repeating unit of the O antigen. In Shigella boydii, this protein is UDP-Gal:alpha-D-GlcNAc-diphosphoundecaprenol beta-1,4-galactosyltransferase (wfeD).